The chain runs to 89 residues: Small ribosomal subunit protein uS15 (89 aa).

Belongs to the universal ribosomal protein uS15 family. Part of the 30S ribosomal subunit. Forms a bridge to the 50S subunit in the 70S ribosome, contacting the 23S rRNA.

Functionally, one of the primary rRNA binding proteins, it binds directly to 16S rRNA where it helps nucleate assembly of the platform of the 30S subunit by binding and bridging several RNA helices of the 16S rRNA. In terms of biological role, forms an intersubunit bridge (bridge B4) with the 23S rRNA of the 50S subunit in the ribosome. This chain is Small ribosomal subunit protein uS15, found in Buchnera aphidicola subsp. Schizaphis graminum (strain Sg).